The primary structure comprises 718 residues: Probable protein S-acyltransferase 19 (718 aa).

2 helical membrane-spanning segments follow: residues 16–36 (VVAI…FAPF) and 41–61 (IWEY…FVLY). The disordered stretch occupies residues 100–125 (ETGSHLQSSPSVASRTSTLPNSSVKG). A compositionally biased stretch (polar residues) spans 103-124 (SHLQSSPSVASRTSTLPNSSVK). The DHHC domain maps to 174–224 (LFCTLCNAEVRKFSKHCRSCDKCVDCFDHHCRWLNNCVGRKNYMTFISLMA). Cys-204 (S-palmitoyl cysteine intermediate) is an active-site residue. A run of 2 helical transmembrane segments spans residues 222–242 (LMAV…AVIV) and 277–297 (AVSM…MLLI). Disordered stretches follow at residues 454–511 (SSVS…HVHE), 598–649 (PATT…QQQQ), and 664–718 (GPLV…GTRK). Polar residues-rich tracts occupy residues 479–488 (CRNSYAPSQG) and 598–626 (PATT…TQNP). A compositionally biased stretch (basic and acidic residues) spans 673 to 687 (DGLRHDGDSGREGQD).

The protein belongs to the DHHC palmitoyltransferase family.

It is found in the cell membrane. The enzyme catalyses L-cysteinyl-[protein] + hexadecanoyl-CoA = S-hexadecanoyl-L-cysteinyl-[protein] + CoA. Its function is as follows. Palmitoyl acyltransferase. This chain is Probable protein S-acyltransferase 19 (PAT19), found in Arabidopsis thaliana (Mouse-ear cress).